The chain runs to 327 residues: Alkanal monooxygenase beta chain (327 aa).

The protein belongs to the bacterial luciferase oxidoreductase family. Heterodimer of an alpha and a beta chain.

The enzyme catalyses a long-chain fatty aldehyde + FMNH2 + O2 = a long-chain fatty acid + hnu + FMN + H2O + 2 H(+). Its function is as follows. Light-emitting reaction in luminous bacteria. The specific role of the beta subunit is unknown, but it is absolutely required for bioluminescence activity. This chain is Alkanal monooxygenase beta chain (luxB), found in Photorhabdus luminescens (Xenorhabdus luminescens).